A 199-amino-acid chain; its full sequence is Recombination protein RecR (199 aa).

The C4-type zinc finger occupies 58–73 (CSVCYNLSETELCRIC). Residues 81-176 (TRLCVVEQPR…EITRLARGIT (96 aa)) form the Toprim domain.

It belongs to the RecR family.

May play a role in DNA repair. It seems to be involved in an RecBC-independent recombinational process of DNA repair. It may act with RecF and RecO. The protein is Recombination protein RecR of Rhodopirellula baltica (strain DSM 10527 / NCIMB 13988 / SH1).